Consider the following 325-residue polypeptide: Probable pectate lyase B (325 aa).

The signal sequence occupies residues 1-15 (MRLPTLFMLAAIATA). Asp132, Asp161, and Asp165 together coordinate Ca(2+). The active site involves Arg218.

It belongs to the polysaccharide lyase 1 family. Ca(2+) serves as cofactor.

The protein localises to the secreted. It carries out the reaction Eliminative cleavage of (1-&gt;4)-alpha-D-galacturonan to give oligosaccharides with 4-deoxy-alpha-D-galact-4-enuronosyl groups at their non-reducing ends.. Its function is as follows. Pectinolytic enzyme consist of four classes of enzymes: pectin lyase, polygalacturonase, pectin methylesterase and rhamnogalacturonase. Among pectinolytic enzymes, pectin lyase is the most important in depolymerization of pectin, since it cleaves internal glycosidic bonds of highly methylated pectins. Favors pectate, the anion, over pectin, the methyl ester. The protein is Probable pectate lyase B (plyB) of Aspergillus terreus (strain NIH 2624 / FGSC A1156).